We begin with the raw amino-acid sequence, 147 residues long: Peptide methionine sulfoxide reductase MsrB (147 aa).

One can recognise a MsrB domain in the interval 8–131 (KEELKKILTE…NSASLKFIPK (124 aa)). C120 functions as the Nucleophile in the catalytic mechanism.

The protein belongs to the MsrB Met sulfoxide reductase family.

It carries out the reaction L-methionyl-[protein] + [thioredoxin]-disulfide + H2O = L-methionyl-(R)-S-oxide-[protein] + [thioredoxin]-dithiol. The sequence is that of Peptide methionine sulfoxide reductase MsrB from Clostridium perfringens (strain SM101 / Type A).